We begin with the raw amino-acid sequence, 129 residues long: Large ribosomal subunit protein bL20 (129 aa).

Positions 1-17 (MARVKRSVNAHKKRRSV) are enriched in basic residues. The segment at 1–29 (MARVKRSVNAHKKRRSVLKASKGYRGQRS) is disordered.

Belongs to the bacterial ribosomal protein bL20 family.

In terms of biological role, binds directly to 23S ribosomal RNA and is necessary for the in vitro assembly process of the 50S ribosomal subunit. It is not involved in the protein synthesizing functions of that subunit. This Mycobacterium ulcerans (strain Agy99) protein is Large ribosomal subunit protein bL20.